Reading from the N-terminus, the 199-residue chain is MRDAVRAKTNRRSVAGMPAELMDLDLRHLHLRIGEGILAARPALIATVLGSCVSVTFHHPSTETGGIFHAMLPTVLGAADGARTPCKYVDAAIETLLGQFARRGIAANDLVVKLFGGAFTMNPEEKQRLRCIVDVGGRNVEVARATLQRFGIEPQSEHILGDRGRKLFFHSGTGEVWVRLLRRTEPPLPSALVCRDDLT.

This sequence belongs to the CheD family.

The catalysed reaction is L-glutaminyl-[protein] + H2O = L-glutamyl-[protein] + NH4(+). Probably deamidates glutamine residues to glutamate on methyl-accepting chemotaxis receptors (MCPs), playing an important role in chemotaxis. This is Probable chemoreceptor glutamine deamidase CheD from Nitratidesulfovibrio vulgaris (strain ATCC 29579 / DSM 644 / CCUG 34227 / NCIMB 8303 / VKM B-1760 / Hildenborough) (Desulfovibrio vulgaris).